Reading from the N-terminus, the 596-residue chain is Chaperone protein DnaK (596 aa).

The residue at position 180 (Thr-180) is a Phosphothreonine; by autocatalysis.

Belongs to the heat shock protein 70 family.

In terms of biological role, acts as a chaperone. The chain is Chaperone protein DnaK from Thermotoga neapolitana (strain ATCC 49049 / DSM 4359 / NBRC 107923 / NS-E).